Reading from the N-terminus, the 332-residue chain is Ribosomal RNA-processing protein 8 (332 aa).

The segment at 1 to 109 (MGKKRINEVS…EVEKKNEEGD (109 aa)) is disordered. Composition is skewed to basic residues over residues 38 to 53 (KKKKRPWRNKVRKLAA) and 82 to 94 (KKKKKRGPKKKKY). Residues 95 to 109 (KPEAAEVEKKNEEGD) are compositionally biased toward basic and acidic residues. Positions 158, 193, 213, 225, 226, and 242 each coordinate S-adenosyl-L-methionine.

Belongs to the methyltransferase superfamily. RRP8 family.

The protein resides in the nucleus. Its subcellular location is the nucleolus. In terms of biological role, probable methyltransferase required to silence rDNA. The sequence is that of Ribosomal RNA-processing protein 8 (rrp-8) from Caenorhabditis briggsae.